Here is a 336-residue protein sequence, read N- to C-terminus: 3-isopropylmalate dehydrogenase (336 aa).

Substrate contacts are provided by Arg87, Arg97, Arg121, and Asp211. Mg(2+) contacts are provided by Asp211, Asp235, and Asp239. Residue 271 to 283 (GSAPDIAGQGIAD) coordinates NAD(+).

It belongs to the isocitrate and isopropylmalate dehydrogenases family. LeuB type 2 subfamily. Homodimer. The cofactor is Mg(2+). Mn(2+) serves as cofactor.

The protein resides in the cytoplasm. It catalyses the reaction (2R,3S)-3-isopropylmalate + NAD(+) = 4-methyl-2-oxopentanoate + CO2 + NADH. Its pathway is amino-acid biosynthesis; L-leucine biosynthesis; L-leucine from 3-methyl-2-oxobutanoate: step 3/4. Its function is as follows. Catalyzes the oxidation of 3-carboxy-2-hydroxy-4-methylpentanoate (3-isopropylmalate) to 3-carboxy-4-methyl-2-oxopentanoate. The product decarboxylates to 4-methyl-2 oxopentanoate. The polypeptide is 3-isopropylmalate dehydrogenase (Rhodococcus jostii (strain RHA1)).